A 1434-amino-acid polypeptide reads, in one-letter code: MEPANLSNLRGSSLRGSTRGSLRANSNSIWRNNGVEIFSRSSRDEDDEEALKWAALEKLPTFDRLRKGLLFGSQGAAAEVDINDLGFQERKNLLERLVKVADEDNEKFLLKLKNRIDRVGIDLPTIEVRYEHLNIDADAYVGSRSLPTFMNFMTNFVETLLNSLHILSSRKRQLTILKDISGIIKPCRMTLLLGPPSSGKTTLLLALAGKLDPALKVTGKVSYNGHELHEFVPQRTAAYISQHDLHIGEMTVRETLEFSARCQGVGSRFEMLAELSRREKAANIKPDADIDIYMKAAATEGQEANVVTDYVLKILGLDICADTMVGDDMIRGISGGQKKRVTTGEMLVGPSKALFMDEISTGLDSSTTYSIVNSLRQSVQILKGTAVISLLQPAPETYNLFDDIILLSDGYIVYQGPRDDVLEFFESMGFKCPQRKGVADFLQEVTSKKDQQQYWSKRNEPYRFITSKEFAEAYQSFHVGRKLGDELATPFDKTKCHPAALTNEKYGIGKKELLKVCTERELLLMKRNSFVYMFKFSQLTIMALITMTLFFRTEMPRDTTDDGGIYAGALFFVVIMIMFNGMSELAMTIFKLPVFYKQRDLLFFPSWAYAIPSWILKIPVTLVEVGLWVILTYYVIGFDPNITRFLKQFLLLIVVNQMASGMFRFIGAVGRTMGVASTFGSFALLLQFALGGFVLSRDDVKSWWIWGYWISPMMYSVNSILVNEFDGKKWNHIVPGGNETLGSTVVKSRGFFPEAYWYWIGVGALVGFTVVFNFCYSLALAYLNPFDKPQAVLPEDGENAENGEVSSQITSTDGGDSISESQNNKKGMVLPFEPHSITFDDVVYSVDMPQEMKEQGAGEDRLVLLKGVSGAFRPGVLTALMGVSGAGKTTLMDVLAGRKTGGYIDGEIKISGYPKKQETFARISGYCEQNDIHSPYVTVYESLVYSAWLRLPQDVDEKTRKMFVDEVMELVELGPLRSALVGLPGVNGLSTEQRKRLTIAVELVANPSIIFMDEPTSGLDARAAAIVMRTVRNTVDTGRTVVCTIHQPSIDIFEAFDELFLMKRGGQEIYVGPLGRHSCHLIKYFESNPGVAKIKEGYNPATWMLEVTASAQEMMLGIDFTEVYKNSDLYRRNKALISELGVPRPGSKDLHFETQYSQSFWTQCVACLWKQHWSYWRNPAYTAVRFIFTTFIALIFGTMFWDLGTKVSKSQDLLNAMGSMYAAVLFLGVQNASSVQPVVAIERTVFYRERAAGMYSAIPYAFGQVSIEIPYIFVQSVFYGIIVYAMIGFEWDVGKFFWYLFIMFFTLLYFTFYGMMGVAVTPNQNVASIVAAFFYGVWNLFSGFIIPRPRMPVWWRWYYWANPVAWTLYGLVASQFGDIQTKLSDNETVEQFLRRYFGFKHDFLGVVAAVLTAYVFMFAFTFAFAIKAFNFQRR.

A disordered region spans residues 1–22 (MEPANLSNLRGSSLRGSTRGSL). One can recognise an ABC transporter 1 domain in the interval 161-434 (LNSLHILSSR…FESMGFKCPQ (274 aa)). Position 194–201 (194–201 (GPPSSGKT)) interacts with ATP. The ABC transmembrane type-2 1 domain maps to 512-725 (ELLKVCTERE…SVNSILVNEF (214 aa)). 7 helical membrane passes run 530–550 (FVYMFKFSQLTIMALITMTLF), 563–583 (GGIYAGALFFVVIMIMFNGMS), 618–638 (IPVTLVEVGLWVILTYYVIGF), 649–669 (FLLLIVVNQMASGMFRFIGAV), 675–695 (VASTFGSFALLLQFALGGFVL), 702–722 (SWWIWGYWISPMMYSVNSILV), and 760–780 (IGVGALVGFTVVFNFCYSLAL). The interval 793–824 (LPEDGENAENGEVSSQITSTDGGDSISESQNN) is disordered. A compositionally biased stretch (polar residues) spans 804–824 (EVSSQITSTDGGDSISESQNN). The region spanning 837–1089 (ITFDDVVYSV…HLIKYFESNP (253 aa)) is the ABC transporter 2 domain. An ATP-binding site is contributed by 882–889 (GVSGAGKT). An ABC transmembrane type-2 2 domain is found at 1162–1376 (TQCVACLWKQ…TLYGLVASQF (215 aa)). 7 helical membrane-spanning segments follow: residues 1181 to 1201 (YTAVRFIFTTFIALIFGTMFW), 1221 to 1241 (YAAVLFLGVQNASSVQPVVAI), 1269 to 1289 (IPYIFVQSVFYGIIVYAMIGF), 1296 to 1316 (FFWYLFIMFFTLLYFTFYGMM), 1326 to 1346 (VASIVAAFFYGVWNLFSGFII), 1357 to 1377 (WYYWANPVAWTLYGLVASQFG), and 1406 to 1426 (VVAAVLTAYVFMFAFTFAFAI).

This sequence belongs to the ABC transporter superfamily. ABCG family. PDR (TC 3.A.1.205) subfamily.

The protein localises to the membrane. In terms of biological role, may be a general defense protein. The chain is Pleiotropic drug resistance protein 1 (PDR1) from Nicotiana tabacum (Common tobacco).